A 394-amino-acid chain; its full sequence is HORMA domain-containing protein 1 (394 aa).

Residues histidine 24 to valine 226 form the HORMA domain. The span at isoleucine 253–lysine 282 shows a compositional bias: basic and acidic residues. A disordered region spans residues isoleucine 253–isoleucine 394. The span at glutamate 288–glutamate 300 shows a compositional bias: acidic residues. Composition is skewed to polar residues over residues leucine 310 to threonine 324 and lysine 343 to lysine 352. A compositionally biased stretch (basic and acidic residues) spans glutamine 362–aspartate 374. Serine 376 carries the post-translational modification Phosphoserine. The Nuclear localization signal signature appears at lysine 383–lysine 386.

In terms of assembly, interacts with HORMAD2. Interacts with IHO1. Phosphorylated at Ser-377 in a SPO11-dependent manner. Testis-specific. Over-expressed in carcinomas.

The protein localises to the nucleus. It is found in the chromosome. Plays a key role in meiotic progression. Regulates 3 different functions during meiosis: ensures that sufficient numbers of processed DNA double-strand breaks (DSBs) are available for successful homology search by increasing the steady-state numbers of single-stranded DSB ends. Promotes synaptonemal-complex formation independently of its role in homology search. Plays a key role in the male mid-pachytene checkpoint and the female meiotic prophase checkpoint: required for efficient build-up of ATR activity on unsynapsed chromosome regions, a process believed to form the basis of meiotic silencing of unsynapsed chromatin (MSUC) and meiotic prophase quality control in both sexes. This Homo sapiens (Human) protein is HORMA domain-containing protein 1.